The primary structure comprises 467 residues: Asparagine--tRNA ligase (467 aa).

The protein belongs to the class-II aminoacyl-tRNA synthetase family. In terms of assembly, homodimer.

It localises to the cytoplasm. The enzyme catalyses tRNA(Asn) + L-asparagine + ATP = L-asparaginyl-tRNA(Asn) + AMP + diphosphate + H(+). The protein is Asparagine--tRNA ligase of Haemophilus influenzae (strain PittGG).